Reading from the N-terminus, the 570-residue chain is 15-cis-phytoene desaturase, chloroplastic/chromoplastic (570 aa).

The N-terminal 91 residues, 1 to 91 (MSIVGLVSVV…AQLSASFRSS (91 aa)), are a transit peptide targeting the chloroplast and chromoplast. Residues 104–120 (GAGLAGLSTAKYLADAG), alanine 108, 127–128 (ES), lysine 135, 152–153 (HI), and tyrosine 158 each bind FAD. Position 293 (arginine 293) interacts with substrate. Aspartate 524 is a binding site for FAD. Alanine 532 provides a ligand contact to substrate. Methionine 534 is a binding site for FAD.

This sequence belongs to the carotenoid/retinoid oxidoreductase family. As to quaternary structure, homotetramer. FAD is required as a cofactor. As to expression, expressed more strongly in flowers than in leaves.

It is found in the plastid. The protein resides in the chloroplast. It localises to the chromoplast. The protein localises to the membrane. It catalyses the reaction 2 a plastoquinone + 15-cis-phytoene = 9,9',15-tri-cis-zeta-carotene + 2 a plastoquinol. Its pathway is carotenoid biosynthesis; lycopene biosynthesis. In terms of biological role, converts phytoene into zeta-carotene via the intermediary of phytofluene by the symmetrical introduction of two double bonds at the C-11 and C-11' positions of phytoene with a concomitant isomerization of two neighboring double bonds at the C9 and C9' positions from trans to cis. The sequence is that of 15-cis-phytoene desaturase, chloroplastic/chromoplastic (PDS1) from Narcissus pseudonarcissus (Daffodil).